Consider the following 57-residue polypeptide: Metallothionein-2 (57 aa).

Positions proline 1 to proline 28 are beta. Positions 4, 5, 9, 11, 16, 20, 22, 25, 27, 30, 33, 37, 39, 45, 49, 53, 55, and 56 each coordinate a divalent metal cation. The alpha stretch occupies residues proline 29 to proline 57.

Belongs to the metallothionein superfamily. Type 3 family.

Functionally, metallothioneins have a high content of cysteine residues that bind various heavy metals. Class I MTS in marine crustacea are involved in the sequestration of elevated levels of heavy-metal ions. The protein is Metallothionein-2 of Scylla serrata (Mud crab).